A 294-amino-acid polypeptide reads, in one-letter code: Elongation factor Ts (294 aa).

Positions 79–82 (TDFV) are involved in Mg(2+) ion dislocation from EF-Tu.

Belongs to the EF-Ts family.

It is found in the cytoplasm. In terms of biological role, associates with the EF-Tu.GDP complex and induces the exchange of GDP to GTP. It remains bound to the aminoacyl-tRNA.EF-Tu.GTP complex up to the GTP hydrolysis stage on the ribosome. This chain is Elongation factor Ts, found in Geobacillus thermodenitrificans (strain NG80-2).